Consider the following 948-residue polypeptide: MAQQYQPGQRWISDSEAELGLGTVLAQDGRLLTVLYPATGETRQYALRNAPLTRVRFSPGDVITHFENWKMTVREVDDVDGLLVYHGLNAQNELVTLPETQLSNFIQFRLATDRLFAGQIDQLSWFSLRYNTLEHTSRQLQSSLWGLGGVRAQPIAHQLHIAREVADRIAPRVLLADEVGLGKTIEAGLVIHRQLLSGRASRVLILVPENLQHQWLVEMRRRFNLQVALFDAERFMESDAGNPFEDTQLALVALEWLVEDEKAQDALFAAGWDLMVVDEAHHLVWHEDKASREYSLVEQLAEVIAGVLLLTATPEQLGQDSHFARLRLLDPNRFHDLKAFRAESENYRPVAQAVQELLDKGKLSAAAQETIHGFLGAEGDSLLAAVNTGDEEAKSRLIRELLDRHGTGRVLFRNTRAAVQGFPERKLHQYPLPCPVEYLELPVGEHADLYPEVSFQSHSDVSEEERWWRFDPRVDWLIDTLKMLKRVKVLVICAHAETAMDLEDALRVRSGIPATVFHEGMNILERDRAAAYFADEEFGAQVLICSEIGSEGRNFQFSHHLVLFDLPSHPDLLEQRIGRLDRIGQKHTIELHVPFLETSPQARLFQWYHEALNAFLNTCPTGNALQHQFGPRLLPLLESGDDDKWQTLINEARSERERLESELHTGRDRLLELNSGGAGEGEALVEAILDQDDQFSLPIYMETLFDAFGIDSEDHSENALILKPSEKMLDASFPLGDDEGVTITYDRNQALSREDMQFITWEHPMVQGGMDLVLSGSMGNTAVALIKNKALKPGTVLLELIYVSEVVAPRSLQLGRYLPPAALRCLLDPNGNDLASRVSFNTLNDQLESVPRASANKFIQAQRDQLTPRINAGEEKIMPKHAERVAEAQRRLAADTEEELARLTALQAVNPTVRDSELVALRTQREQGLAMLEKAALRLEAIRVLVAG.

The Helicase ATP-binding domain maps to 164 to 332 (EVADRIAPRV…FARLRLLDPN (169 aa)). ATP is bound at residue 177 to 184 (DEVGLGKT). Positions 278–281 (DEAH) match the DEAH box motif. The Helicase C-terminal domain maps to 473-627 (RVDWLIDTLK…TCPTGNALQH (155 aa)).

This sequence belongs to the SNF2/RAD54 helicase family. RapA subfamily. Interacts with the RNAP. Has a higher affinity for the core RNAP than for the holoenzyme. Its ATPase activity is stimulated by binding to RNAP.

In terms of biological role, transcription regulator that activates transcription by stimulating RNA polymerase (RNAP) recycling in case of stress conditions such as supercoiled DNA or high salt concentrations. Probably acts by releasing the RNAP, when it is trapped or immobilized on tightly supercoiled DNA. Does not activate transcription on linear DNA. Probably not involved in DNA repair. The protein is RNA polymerase-associated protein RapA of Pseudomonas syringae pv. syringae (strain B728a).